A 393-amino-acid chain; its full sequence is ATP phosphoribosyltransferase regulatory subunit (393 aa).

The protein belongs to the class-II aminoacyl-tRNA synthetase family. HisZ subfamily. In terms of assembly, heteromultimer composed of HisG and HisZ subunits.

The protein localises to the cytoplasm. It functions in the pathway amino-acid biosynthesis; L-histidine biosynthesis; L-histidine from 5-phospho-alpha-D-ribose 1-diphosphate: step 1/9. In terms of biological role, required for the first step of histidine biosynthesis. May allow the feedback regulation of ATP phosphoribosyltransferase activity by histidine. The chain is ATP phosphoribosyltransferase regulatory subunit from Nitrosospira multiformis (strain ATCC 25196 / NCIMB 11849 / C 71).